The chain runs to 161 residues: Large ribosomal subunit protein uL15 (161 aa).

Residues 1-42 (MKLSDIADNAGSRKKRMRVGRGIGSGKGKQSGRGGKGQTARS) form a disordered region. A compositionally biased stretch (gly residues) spans 21-37 (RGIGSGKGKQSGRGGKG).

This sequence belongs to the universal ribosomal protein uL15 family. Part of the 50S ribosomal subunit.

Functionally, binds to the 23S rRNA. This chain is Large ribosomal subunit protein uL15, found in Bradyrhizobium diazoefficiens (strain JCM 10833 / BCRC 13528 / IAM 13628 / NBRC 14792 / USDA 110).